The following is a 100-amino-acid chain: uncharacterized protein (100 aa).

The N-terminal stretch at 1-23 (MKYVALAFVLSLVILQISAQVGA) is a signal peptide.

Nacreous layer of shell (at protein level). Expressed primarily in the mantle with highest level in the mantle pallium and lower level in the mantle edge.

It localises to the secreted. This is an uncharacterized protein from Margaritifera margaritifera (Freshwater pearl mussel).